The sequence spans 340 residues: Flap endonuclease 1 (340 aa).

The interval methionine 1–arginine 98 is N-domain. 7 residues coordinate Mg(2+): aspartate 27, aspartate 80, glutamate 151, glutamate 153, aspartate 172, aspartate 174, and aspartate 235. An I-domain region spans residues glutamate 115–glycine 256. Residues lysine 332–phenylalanine 340 form an interaction with PCNA region.

The protein belongs to the XPG/RAD2 endonuclease family. FEN1 subfamily. Interacts with PCNA. PCNA stimulates the nuclease activity without altering cleavage specificity. Requires Mg(2+) as cofactor.

Structure-specific nuclease with 5'-flap endonuclease and 5'-3' exonuclease activities involved in DNA replication and repair. During DNA replication, cleaves the 5'-overhanging flap structure that is generated by displacement synthesis when DNA polymerase encounters the 5'-end of a downstream Okazaki fragment. Binds the unpaired 3'-DNA end and kinks the DNA to facilitate 5' cleavage specificity. Cleaves one nucleotide into the double-stranded DNA from the junction in flap DNA, leaving a nick for ligation. Also involved in the base excision repair (BER) pathway. Acts as a genome stabilization factor that prevents flaps from equilibrating into structures that lead to duplications and deletions. Also possesses 5'-3' exonuclease activity on nicked or gapped double-stranded DNA. The protein is Flap endonuclease 1 of Methanocella arvoryzae (strain DSM 22066 / NBRC 105507 / MRE50).